The following is a 324-amino-acid chain: Heat-inducible transcription repressor HrcA (324 aa).

It belongs to the HrcA family.

Negative regulator of class I heat shock genes (grpE-dnaK-dnaJ and groELS operons). Prevents heat-shock induction of these operons. The protein is Heat-inducible transcription repressor HrcA of Parasynechococcus marenigrum (strain WH8102).